A 104-amino-acid polypeptide reads, in one-letter code: Small ribosomal subunit protein uS10 (104 aa).

It belongs to the universal ribosomal protein uS10 family. In terms of assembly, part of the 30S ribosomal subunit.

In terms of biological role, involved in the binding of tRNA to the ribosomes. The polypeptide is Small ribosomal subunit protein uS10 (Helicobacter pylori (strain J99 / ATCC 700824) (Campylobacter pylori J99)).